A 680-amino-acid polypeptide reads, in one-letter code: Nodulation protein NolNO (680 aa).

Belongs to the NodU/CmcH family.

The protein localises to the cytoplasm. Its function is as follows. Involved in the O-carbamoylation of nod factors. The sequence is that of Nodulation protein NolNO (nolO) from Sinorhizobium fredii (strain NBRC 101917 / NGR234).